The primary structure comprises 449 residues: uncharacterized protein (449 aa).

It localises to the mitochondrion. This is an uncharacterized protein from Podospora anserina (strain S / ATCC MYA-4624 / DSM 980 / FGSC 10383) (Pleurage anserina).